A 113-amino-acid chain; its full sequence is MNTVRVTFLLVFVLAVSLGQADKDENRMEMQGKTEQGKSYLDFAENLLLQKLEELEAKLLEEDSEESRNSRQKRCIGEGVPCDENDPRCCSGLVCLKPTLHGIWYKSYYCYKK.

The signal sequence occupies residues 1–21; that stretch reads MNTVRVTFLLVFVLAVSLGQA. Positions 22–74 are excised as a propeptide; the sequence is DKDENRMEMQGKTEQGKSYLDFAENLLLQKLEELEAKLLEEDSEESRNSRQKR. 3 disulfide bridges follow: Cys-75–Cys-90, Cys-82–Cys-95, and Cys-89–Cys-110.

This sequence belongs to the neurotoxin 14 (magi-1) family. 01 (HNTX-16) subfamily. As to expression, expressed by the venom gland.

The protein localises to the secreted. In terms of biological role, probable ion channel inhibitor. This Cyriopagopus hainanus (Chinese bird spider) protein is U11-theraphotoxin-Hhn1a.